The chain runs to 137 residues: 5-hydroxyisourate hydrolase (137 aa).

The signal sequence occupies residues 1–23; it reads MLKRYLVLSVVTAAFSLPSLVYA. Substrate is bound by residues His32, Arg70, and Tyr134.

It belongs to the transthyretin family. 5-hydroxyisourate hydrolase subfamily. Homotetramer.

The protein localises to the periplasm. It carries out the reaction 5-hydroxyisourate + H2O = 5-hydroxy-2-oxo-4-ureido-2,5-dihydro-1H-imidazole-5-carboxylate + H(+). Catalyzes the hydrolysis of 5-hydroxyisourate (HIU) to 2-oxo-4-hydroxy-4-carboxy-5-ureidoimidazoline (OHCU). The sequence is that of 5-hydroxyisourate hydrolase (hiuH) from Escherichia coli O157:H7.